The sequence spans 245 residues: Demethylmenaquinone methyltransferase (245 aa).

S-adenosyl-L-methionine is bound by residues Thr62, Asp80, 105–106 (DA), and Ser122.

It belongs to the class I-like SAM-binding methyltransferase superfamily. MenG/UbiE family.

The catalysed reaction is a 2-demethylmenaquinol + S-adenosyl-L-methionine = a menaquinol + S-adenosyl-L-homocysteine + H(+). The protein operates within quinol/quinone metabolism; menaquinone biosynthesis; menaquinol from 1,4-dihydroxy-2-naphthoate: step 2/2. In terms of biological role, methyltransferase required for the conversion of demethylmenaquinol (DMKH2) to menaquinol (MKH2). The sequence is that of Demethylmenaquinone methyltransferase from Clavibacter sepedonicus (Clavibacter michiganensis subsp. sepedonicus).